The sequence spans 354 residues: AKPAAENLSLVVHGPGDLRLENYPIPEPGPNEVLLKMHSVGICGSDVHYWQGRIGDFVVKKPMVLGHEASGTVVKVGSLVRHLQPGDRVAIQPGAPRQTDEFCKIGRYNLSPTIFFCATPPDDGNLCRFYKHNANFCYKLPDNVTFEEGALIEPLSVGIHACRRAGVTLGNKVLVCGAGPIGLVNLLAAKAMGAAQVVVTDLSASRLSKAKEVGADFILEISNESPEEIAKKVEGLLGSKPEVTIECTGVETSIQAGIYATHSGGTLVLVGLGSEMTSVPLVHAATREVDIKGVFRYCNTWPMAISMLASKSVNVKPLVTHRFPLEKALEAFETSKKGLGLKVMIKCDPSDQNP.

Zn(2+) is bound at residue Cys-43. Tyr-49 lines the substrate pocket. Positions 67 and 68 each coordinate Zn(2+). Glu-153 is a substrate binding site. The NAD(+) site is built by Ile-181, Asp-201, and Arg-206. Ser-208 and Ser-222 each carry phosphoserine. NAD(+) contacts are provided by residues 270–272 (VGL) and 294–296 (VFR). Positions 296 and 297 each coordinate substrate.

It belongs to the zinc-containing alcohol dehydrogenase family. As to quaternary structure, homotetramer. The cofactor is Zn(2+). In terms of tissue distribution, expressed in liver.

The protein localises to the mitochondrion membrane. It is found in the cell projection. The protein resides in the cilium. Its subcellular location is the flagellum. The catalysed reaction is xylitol + NAD(+) = D-xylulose + NADH + H(+). The enzyme catalyses L-iditol + NAD(+) = keto-L-sorbose + NADH + H(+). It carries out the reaction keto-D-fructose + NADH + H(+) = D-sorbitol + NAD(+). Functionally, polyol dehydrogenase that catalyzes the reversible NAD(+)-dependent oxidation of various sugar alcohols. Is mostly active with xylitol, L-iditol and D-sorbitol (D-glucitol) as substrates, leading to the C2-oxidized products D-xylulose, L-sorbose and D-fructose, respectively. Is a key enzyme in the polyol pathway that interconverts glucose and fructose via sorbitol, which constitutes an important alternate route for glucose metabolism. May play a role in sperm motility by using sorbitol as an alternative energy source for sperm motility. In Ovis aries (Sheep), this protein is Sorbitol dehydrogenase (SORD).